Consider the following 184-residue polypeptide: ATP synthase subunit delta (184 aa).

This sequence belongs to the ATPase delta chain family. In terms of assembly, F-type ATPases have 2 components, F(1) - the catalytic core - and F(0) - the membrane proton channel. F(1) has five subunits: alpha(3), beta(3), gamma(1), delta(1), epsilon(1). CF(0) has four main subunits: a(1), b(1), b'(1) and c(10-14). The alpha and beta chains form an alternating ring which encloses part of the gamma chain. F(1) is attached to F(0) by a central stalk formed by the gamma and epsilon chains, while a peripheral stalk is formed by the delta, b and b' chains.

It localises to the cellular thylakoid membrane. In terms of biological role, f(1)F(0) ATP synthase produces ATP from ADP in the presence of a proton or sodium gradient. F-type ATPases consist of two structural domains, F(1) containing the extramembraneous catalytic core and F(0) containing the membrane proton channel, linked together by a central stalk and a peripheral stalk. During catalysis, ATP synthesis in the catalytic domain of F(1) is coupled via a rotary mechanism of the central stalk subunits to proton translocation. This protein is part of the stalk that links CF(0) to CF(1). It either transmits conformational changes from CF(0) to CF(1) or is implicated in proton conduction. The polypeptide is ATP synthase subunit delta (Synechococcus sp. (strain PCC 6716)).